Reading from the N-terminus, the 313-residue chain is Fructose-1,6-bisphosphatase class 1 (313 aa).

Residues glutamate 91, aspartate 112, leucine 114, and aspartate 115 each contribute to the Mg(2+) site. Residues aspartate 115–serine 118, tyrosine 223, and lysine 254 each bind substrate. Glutamate 260 contacts Mg(2+).

It belongs to the FBPase class 1 family. Homotetramer. Mg(2+) is required as a cofactor.

The protein localises to the cytoplasm. It carries out the reaction beta-D-fructose 1,6-bisphosphate + H2O = beta-D-fructose 6-phosphate + phosphate. Its pathway is carbohydrate biosynthesis; gluconeogenesis. This is Fructose-1,6-bisphosphatase class 1 from Geobacter sulfurreducens (strain ATCC 51573 / DSM 12127 / PCA).